A 937-amino-acid polypeptide reads, in one-letter code: Ubiquitin carboxyl-terminal hydrolase 37 (937 aa).

The KEN box 1 signature appears at 38–40; the sequence is RDN. 2 consecutive short sequence motifs (D-box) follow at residues 76-84 and 101-110; these read RMTLTLKDS and KEYLETVKLG. Over residues 132–149 the composition is skewed to polar residues; it reads TAQNDSGLSPSDKQSAPR. Disordered stretches follow at residues 132–216 and 232–258; these read TAQN…KAIT and QSEE…SRTG. Residues 151 to 161 show a composition bias toward basic and acidic residues; it reads SSLDSREDSTP. The short motif at 162 to 170 is the D-box 3 element; that stretch reads RKPLGSPSR. Residues 204 to 206 carry the KEN box 2 motif; that stretch reads KEN. Positions 322–911 constitute a USP domain; that stretch reads QGFSNLGNTC…SGYIFFYMHK (590 aa). Residue cysteine 331 is the Nucleophile of the active site. A compositionally biased stretch (polar residues) spans 609-625; the sequence is NSSTLRRASQRPESSGS. Disordered stretches follow at residues 609 to 632 and 688 to 710; these read NSST…DSDS and TSLC…GDAD. Residues 672-691 enclose the UIM 1 domain; the sequence is NDEEMLAAVLEMSRHDTSLC. The KEN box 3 motif lies at 742 to 744; that stretch reads KEN. UIM domains follow at residues 766–785 and 788–807; these read REEQ…QEAR and REDD…FNNS. The active-site Proton acceptor is histidine 866.

Belongs to the peptidase C19 family.

It catalyses the reaction Thiol-dependent hydrolysis of ester, thioester, amide, peptide and isopeptide bonds formed by the C-terminal Gly of ubiquitin (a 76-residue protein attached to proteins as an intracellular targeting signal).. Deubiquitinase that antagonizes the anaphase-promoting complex (APC/C) during G1/S transition by mediating deubiquitination of APC/C target proteins, thereby promoting S phase entry. Specifically mediates deubiquitination of 'Lys-11'-linked polyubiquitin chains, a specific ubiquitin-linkage type mediated by the APC/C complex. In Danio rerio (Zebrafish), this protein is Ubiquitin carboxyl-terminal hydrolase 37 (usp37).